The sequence spans 465 residues: Serine carboxypeptidase-like 46 (465 aa).

A signal peptide spans 1 to 25; sequence MPRLQCLTMATSLILLLQALSLVSS. 3 disulfide bridges follow: cysteine 88–cysteine 344, cysteine 245–cysteine 263, and cysteine 288–cysteine 313. Residues asparagine 137 and asparagine 170 are each glycosylated (N-linked (GlcNAc...) asparagine). Serine 179 is an active-site residue. Residue asparagine 246 is glycosylated (N-linked (GlcNAc...) asparagine). Residues aspartate 381 and histidine 438 contribute to the active site.

The protein belongs to the peptidase S10 family. Ubiquitous.

Its subcellular location is the secreted. Probable carboxypeptidase. In Arabidopsis thaliana (Mouse-ear cress), this protein is Serine carboxypeptidase-like 46 (SCPL46).